Consider the following 131-residue polypeptide: Profilin (131 aa).

This sequence belongs to the profilin family. As to quaternary structure, occurs in many kinds of cells as a complex with monomeric actin in a 1:1 ratio.

It localises to the cytoplasm. Its subcellular location is the cytoskeleton. Its function is as follows. Binds to actin and affects the structure of the cytoskeleton. At high concentrations, profilin prevents the polymerization of actin, whereas it enhances it at low concentrations. By binding to PIP2, it inhibits the formation of IP3 and DG. This is Profilin from Prunus persica (Peach).